Here is a 242-residue protein sequence, read N- to C-terminus: Protein ABHD14A (242 aa).

A helical; Signal-anchor for type II membrane protein membrane pass occupies residues 6 to 26 (AALLGLGLLLMFLLYMGLPGP). Residue Asn-38 is glycosylated (N-linked (GlcNAc...) asparagine). Active-site charge relay system residues include Ser-142, Asp-193, and His-220.

This sequence belongs to the AB hydrolase superfamily. ABHD14 family.

The protein resides in the cytoplasm. The protein localises to the membrane. Its function is as follows. Possible role in granule neuron development. The protein is Protein ABHD14A of Rattus norvegicus (Rat).